The sequence spans 247 residues: Transcription factor bHLH92 (247 aa).

One can recognise a bHLH domain in the interval 85-134 (ERSRRHMLKERTRREKQKQSYLALHSLLPFATKNDKNSIVEKAVDEIAKL).

In terms of assembly, homodimer.

The protein localises to the nucleus. The protein is Transcription factor bHLH92 (BHLH92) of Arabidopsis thaliana (Mouse-ear cress).